The chain runs to 122 residues: MALTNEDIINAVSEMSVMQIVELIKAMEEKFGVTAAAAVAAGPAAAAPVAEEQTEFTVVLAEAGDKKVNVIKVVRELTGLGLKEAKAVVDGAPGVVKEGISKDEAEAAKKALEEAGAKVELK.

Belongs to the bacterial ribosomal protein bL12 family. Homodimer. Part of the ribosomal stalk of the 50S ribosomal subunit. Forms a multimeric L10(L12)X complex, where L10 forms an elongated spine to which 2 to 4 L12 dimers bind in a sequential fashion. Binds GTP-bound translation factors.

Functionally, forms part of the ribosomal stalk which helps the ribosome interact with GTP-bound translation factors. Is thus essential for accurate translation. The chain is Large ribosomal subunit protein bL12 from Azotobacter vinelandii (strain DJ / ATCC BAA-1303).